A 137-amino-acid polypeptide reads, in one-letter code: Nucleoside diphosphate kinase (137 aa).

ATP contacts are provided by Lys-9, Phe-57, Arg-85, Thr-91, Arg-102, and Asn-112. Residue His-115 is the Pros-phosphohistidine intermediate of the active site.

The protein belongs to the NDK family. In terms of assembly, homotetramer. Mg(2+) is required as a cofactor.

The protein resides in the cytoplasm. It catalyses the reaction a 2'-deoxyribonucleoside 5'-diphosphate + ATP = a 2'-deoxyribonucleoside 5'-triphosphate + ADP. The catalysed reaction is a ribonucleoside 5'-diphosphate + ATP = a ribonucleoside 5'-triphosphate + ADP. Functionally, major role in the synthesis of nucleoside triphosphates other than ATP. The ATP gamma phosphate is transferred to the NDP beta phosphate via a ping-pong mechanism, using a phosphorylated active-site intermediate. This is Nucleoside diphosphate kinase from Campylobacter curvus (strain 525.92).